A 984-amino-acid polypeptide reads, in one-letter code: Putative formate dehydrogenase SA2102 (984 aa).

Positions 3–79 (EHLVVTLDGK…PMTVNTVNND (77 aa)) constitute a 2Fe-2S ferredoxin-type domain. [2Fe-2S] cluster contacts are provided by Cys-37, Cys-48, Cys-51, and Cys-63. The 4Fe-4S His(Cys)3-ligated-type domain occupies 79–119 (DVKDAQKEALDRILEKHMLYCTVCDYNNGDCEIHNTMDAWG). Residues His-95, Cys-99, Cys-102, Cys-109, Cys-147, Cys-150, Cys-153, Cys-157, Cys-190, Cys-193, Cys-196, Cys-200, Cys-264, Cys-267, Cys-271, and Cys-299 each contribute to the [4Fe-4S] cluster site. 4Fe-4S ferredoxin-type domains follow at residues 138–165 (PFYRYDPNQCILCGRCVEACQDIEVNET) and 181–211 (NDVPINESSCVSCGQCATVCPCNAMMEVNME). Residues 252–984 (MRKERIKKTK…YVFPGNQVDK (733 aa)) form a formate dehydrogenase region. The 4Fe-4S Mo/W bis-MGD-type domain maps to 257-313 (IKKTKTVCTYCGVGCSFEVWTKDREILKVQPSHDSPANKIATCVKGKFSWGHINSDQ).

In the C-terminal section; belongs to the prokaryotic molybdopterin-containing oxidoreductase family. Requires [2Fe-2S] cluster as cofactor. [4Fe-4S] cluster serves as cofactor. The cofactor is Mo-bis(molybdopterin guanine dinucleotide).

It catalyses the reaction formate + NAD(+) = CO2 + NADH. The protein is Putative formate dehydrogenase SA2102 of Staphylococcus aureus (strain N315).